A 444-amino-acid polypeptide reads, in one-letter code: Type VII secretion system protein EssB (444 aa).

Residues methionine 1–tryptophan 229 lie on the Cytoplasmic side of the membrane. A helical membrane pass occupies residues valine 230 to phenylalanine 250. Over serine 251–lysine 444 the chain is Extracellular. Positions lysine 366–lysine 444 are disordered. A compositionally biased stretch (basic and acidic residues) spans serine 372–lysine 444. A coiled-coil region spans residues leucine 387–lysine 443.

It belongs to the EssB family. As to quaternary structure, may oligomerize and interact with other membrane components to form the Ess system. Interacts with EsaA.

The protein resides in the cell membrane. Component of the type VII secretion system (Ess). Required for the secretion of EsxA and proper accumulation of EssB and EssD. This is Type VII secretion system protein EssB from Staphylococcus aureus (strain USA300).